The chain runs to 270 residues: ES1 protein, mitochondrial (270 aa).

As to expression, expressed specifically in the inner segments of cone photoreceptor cells of the retina (at protein level).

It is found in the mitochondrion. Its function is as follows. Plays a role in promoting mitochondrial enlargement in cone photoreceptor cells in a fusion-independent and ATP-dependent manner. The chain is ES1 protein, mitochondrial from Danio rerio (Zebrafish).